The chain runs to 894 residues: MEPQVTLNVTFKNEIQSFLVSDPENTTWADIEAMVKVSFDLNTIQIKYLDEENEEVSINSQGEYEEALKMAVKQGNQLQMQVHEGHHVVDEAPPPVVGAKRLAARAGKKPLAHYSSLVRVLGSDMKTPEDSAVQSFPLATCDTDQPQDKPPDWFTSYLETFREQVVKETVEKLEQKLHEKLVLQNPSLGSCPSEVSMPTSEETLFLPENQFSWHIACNNCQRRIVGVRYQCSLCPSYNICEDCEAGPYGHDTNHVLLKLRRPVVGSSEPFCHSKYSTPRLPAALEQVRLPLQPCTPVMPTLSAAFVDENLPDGTHLQPGTKFIKHWRMKNTGNVKWSADTKLKFMWGNLTLASTEKKDVLVPCLKAGHVGVVSVEFIAPALEGTYTSHWRLSHKGQQFGPRVWCSIIVDPFPSEESPDNIEKGMISSSKTDDLTCQQEETFLLAKEERQLGEVTEQTEGTAACIPQKAKNVASERELYIPSVDLLTAQDLLSFELLDINIVQELERVPHNTPVDMTPCMSPLPHDSPLIEKPGLGQIQEENEGAGFKALPDSMVSVKRKAENIASVEEAEEDLSGTQFVCETVIRSLTLDAAPDHNPPCRQKSLQMKFALPEEGPLGNEREEIVHIAEEEAVMEEEEDEEEEDELKDEVQSQSSASSEDYIIILPECFDTSRPLGDSMYSSALSQPGLERGAEGEPGVEAGQEPAEAGERLPGGENQPQEHSISDIFTTSQTLETVPLIPEVVELPPPLPRSSPCVHHHGSPGVDLPVTIPEVSSVPDQIRGEPRGSSGLVNSRQKSYDHSRHHHGSSIAGGLVKGALSVAASAYKALFAGPPVTAQPIVSEDQTAALMAHLFEMGFCDRQLNLQLLKKHNYNILQVVTELLQLNNNDWYSQRY.

One can recognise a PB1 domain in the interval 4–85; that stretch reads QVTLNVTFKN…NQLQMQVHEG (82 aa). The residue at position 116 (S116) is a Phosphoserine. The ZZ-type zinc-finger motif lies at 212-264; that stretch reads SWHIACNNCQRRIVGVRYQCSLCPSYNICEDCEAGPYGHDTNHVLLKLRRPVV. Residues C217, C220, C231, C234, C240, C243, H250, and H254 each contribute to the Zn(2+) site. An ATG8 family proteins-binding region spans residues 472–566; that stretch reads ASERELYIPS…KRKAENIASV (95 aa). Phosphothreonine is present on T516. Phosphoserine occurs at positions 520, 526, and 555. Positions 630-646 are enriched in acidic residues; that stretch reads EAVMEEEEDEEEEDELK. Disordered regions lie at residues 630-656, 678-721, and 776-807; these read EAVM…SSAS, MYSS…PQEH, and VPDQ…HHGS. Positions 655-666 are ATG8 family proteins-binding; it reads ASSEDYIIILPE. The UBA domain occupies 841-885; that stretch reads SEDQTAALMAHLFEMGFCDRQLNLQLLKKHNYNILQVVTELLQLN.

In terms of assembly, homooligomer and heterooligomer. Interacts with SQSTM1, titin/TTN, TRIM55, RNF29, USP8, SQSTM1, MAP1LC3A, MAP1LC3B, MAP1LC3C, GABARAP, GABARAPL1 and GABARAPL2. Binds to ubiquitin and ubiquitinated proteins. Interacts with TAX1BP1. Post-translationally, phosphorylated by GSK3A; this phosphorylation inhibits NBR1 involvement in the formation of ubiquitinated protein aggregates.

It localises to the cytoplasm. It is found in the cytoplasmic vesicle. Its subcellular location is the autophagosome. The protein resides in the lysosome. The protein localises to the myofibril. It localises to the sarcomere. It is found in the m line. In terms of biological role, acts probably as a receptor for selective autophagosomal degradation of ubiquitinated targets. This Pongo abelii (Sumatran orangutan) protein is Next to BRCA1 gene 1 protein (NBR1).